Reading from the N-terminus, the 159-residue chain is Transcription elongation factor GreA (159 aa).

Belongs to the GreA/GreB family.

Functionally, necessary for efficient RNA polymerase transcription elongation past template-encoded arresting sites. The arresting sites in DNA have the property of trapping a certain fraction of elongating RNA polymerases that pass through, resulting in locked ternary complexes. Cleavage of the nascent transcript by cleavage factors such as GreA or GreB allows the resumption of elongation from the new 3'terminus. GreA releases sequences of 2 to 3 nucleotides. This is Transcription elongation factor GreA from Buchnera aphidicola subsp. Cinara cedri (strain Cc).